A 542-amino-acid chain; its full sequence is Chaperonin GroEL (542 aa).

ATP contacts are provided by residues 29–32, 86–90, Gly-413, 476–478, and Asp-492; these read TLGP, DGTTT, and NAA.

This sequence belongs to the chaperonin (HSP60) family. In terms of assembly, forms a cylinder of 14 subunits composed of two heptameric rings stacked back-to-back. Interacts with the co-chaperonin GroES.

The protein localises to the cytoplasm. The catalysed reaction is ATP + H2O + a folded polypeptide = ADP + phosphate + an unfolded polypeptide.. In terms of biological role, together with its co-chaperonin GroES, plays an essential role in assisting protein folding. The GroEL-GroES system forms a nano-cage that allows encapsulation of the non-native substrate proteins and provides a physical environment optimized to promote and accelerate protein folding. The sequence is that of Chaperonin GroEL from Lactococcus lactis subsp. lactis (strain IL1403) (Streptococcus lactis).